The sequence spans 382 residues: uncharacterized protein (382 aa).

A PE domain is found at 1 to 92 (MQFLSVIPEQ…GATAYRNTEF (92 aa)). A run of 8 helical transmembrane segments spans residues 23–43 (SALSASYAAAAGPTTAVVSAA), 155–175 (AAVAPLPSAGAGLAQVVNGVV), 203–223 (FIVAGQSALTGVALLQPAVVG), 230–250 (TFLTAGTSAATGLGLLTLAGV), 261–281 (LASGTAATGLGLLGSAGVQLF), 284–304 (AFLLAVPTALGGVGSLAIAVV), 315–335 (LVVPNVVAGIAALQTAGAQFA), and 347–367 (LGAPGIAVLQTAGGHFAQGIG).

The protein belongs to the mycobacterial PE family.

Its subcellular location is the cell membrane. This is an uncharacterized protein from Mycobacterium bovis (strain ATCC BAA-935 / AF2122/97).